Consider the following 239-residue polypeptide: Large ribosomal subunit protein uL2 (239 aa).

Disordered stretches follow at residues 1 to 20 (MGHRIKTQNRGRGGPTYRAP) and 202 to 239 (FGGGGHQHTGRPKTVSRGTSPGRKVGSVAARRTGRRKR).

This sequence belongs to the universal ribosomal protein uL2 family. Part of the 50S ribosomal subunit. Forms a bridge to the 30S subunit in the 70S ribosome.

One of the primary rRNA binding proteins. Required for association of the 30S and 50S subunits to form the 70S ribosome, for tRNA binding and peptide bond formation. It has been suggested to have peptidyltransferase activity; this is somewhat controversial. Makes several contacts with the 16S rRNA in the 70S ribosome. This Methanosphaerula palustris (strain ATCC BAA-1556 / DSM 19958 / E1-9c) protein is Large ribosomal subunit protein uL2.